Reading from the N-terminus, the 89-residue chain is Small ribosomal subunit protein uS15 (89 aa).

The protein belongs to the universal ribosomal protein uS15 family. In terms of assembly, part of the 30S ribosomal subunit. Forms a bridge to the 50S subunit in the 70S ribosome, contacting the 23S rRNA.

Its function is as follows. One of the primary rRNA binding proteins, it binds directly to 16S rRNA where it helps nucleate assembly of the platform of the 30S subunit by binding and bridging several RNA helices of the 16S rRNA. Forms an intersubunit bridge (bridge B4) with the 23S rRNA of the 50S subunit in the ribosome. The protein is Small ribosomal subunit protein uS15 of Desulforudis audaxviator (strain MP104C).